Consider the following 344-residue polypeptide: N-acetyl-gamma-glutamyl-phosphate reductase (344 aa).

Cysteine 150 is an active-site residue.

Belongs to the NAGSA dehydrogenase family. Type 1 subfamily.

The protein localises to the cytoplasm. The enzyme catalyses N-acetyl-L-glutamate 5-semialdehyde + phosphate + NADP(+) = N-acetyl-L-glutamyl 5-phosphate + NADPH + H(+). It functions in the pathway amino-acid biosynthesis; L-arginine biosynthesis; N(2)-acetyl-L-ornithine from L-glutamate: step 3/4. Functionally, catalyzes the NADPH-dependent reduction of N-acetyl-5-glutamyl phosphate to yield N-acetyl-L-glutamate 5-semialdehyde. The protein is N-acetyl-gamma-glutamyl-phosphate reductase of Pseudomonas paraeruginosa (strain DSM 24068 / PA7) (Pseudomonas aeruginosa (strain PA7)).